A 422-amino-acid polypeptide reads, in one-letter code: Glyceraldehyde-3-phosphate dehydrogenase GAPCP1, chloroplastic (422 aa).

The N-terminal 69 residues, 1-69, are a transit peptide targeting the chloroplast; the sequence is MAFSSLLRSA…NARSVQPIKA (69 aa). The segment covering 50–63 has biased composition (polar residues); that stretch reads SGISSSLQNGNARS. The disordered stretch occupies residues 50–84; sequence SGISSSLQNGNARSVQPIKATATEVPSAVRRSSSS. Thr-70 bears the N-acetylthreonine mark. NAD(+)-binding positions include 96 to 97, Asp-118, and Arg-164; that span reads RI. Residues 235 to 237, Thr-266, 295 to 296, and Arg-318 contribute to the D-glyceraldehyde 3-phosphate site; these read SCT and TG. The Nucleophile role is filled by Cys-236. NAD(+) is bound at residue Asn-400.

The protein belongs to the glyceraldehyde-3-phosphate dehydrogenase family. In terms of assembly, homotetramer. Expressed in shoot and root vasculature, leaf veins and vascular tissue of flowers and siliques.

It localises to the plastid. The protein resides in the chloroplast stroma. It catalyses the reaction D-glyceraldehyde 3-phosphate + phosphate + NAD(+) = (2R)-3-phospho-glyceroyl phosphate + NADH + H(+). Involved in plastidial glycolytic pathway and plays a specific role in glycolytic energy production in non-green plastids and chloroplasts. Essential for breakdown of starch to form sucrose for export to non-photosynthetic tissues, and to generate primary metabolites for anabolic pathways such as fatty acid and amino acid synthesis. Plays an important role in plant development by providing substrates for the phosphorylated pathway of serine biosynthesis in roots. Plays a crucial role in pollen development. Functionally redundant with GAPCP2. The chain is Glyceraldehyde-3-phosphate dehydrogenase GAPCP1, chloroplastic (GAPCP1) from Arabidopsis thaliana (Mouse-ear cress).